The chain runs to 180 residues: Capsid assembly scaffolding protein (180 aa).

This sequence belongs to the SPP1-like scaffolding protein family. As to quaternary structure, homodimer.

Its function is as follows. Scaffolding protein involved in the icosahedric procapsid assembly. Coassembles with the capsid proteins to form the procapsid, in which the scaffolding protein is found within the external shell of icosahedrally arranged capsid protein subunits. In a subsequent step the scaffolding protein molecules are released from the procapsid. This is Capsid assembly scaffolding protein (g20) from Lactococcus phage mv4 (Lactococcus delbrueckii bacteriophage mv4).